Consider the following 499-residue polypeptide: Cytochrome P450 710A2 (499 aa).

Residues 5–25 (VSIFASLAPYLVSALLLFFLI) form a helical membrane-spanning segment. Cysteine 439 serves as a coordination point for heme.

This sequence belongs to the cytochrome P450 family. The cofactor is heme. Expressed in the vascular tissues of roots, shoots, stems and leaves. Expressed in root tips, carpes, siliques and seeds.

It localises to the membrane. The enzyme catalyses 5-dehydroepisterol + NADPH + O2 + H(+) = ergosta-5,7,22,24(28)-tetraen-3beta-ol + NADP(+) + 2 H2O. It participates in steroid biosynthesis; sterol biosynthesis. Functionally, required to form the C-22 double bond in the sterol side chain. Possesses in vitro C-22 desaturase activity toward 24-epi-campesterol and beta-sitosterol and produces brassicasterol and stigmasterol, respectively. No activity with campesterol. The polypeptide is Cytochrome P450 710A2 (Arabidopsis thaliana (Mouse-ear cress)).